The sequence spans 240 residues: Transposase for insertion sequence element IS3411 (240 aa).

Positions 125–240 constitute an Integrase catalytic domain; that stretch reads VAERPDQLWV…RASMVFTKRR (116 aa).

Functionally, involved in the transposition of the insertion sequence. This is Transposase for insertion sequence element IS3411 from Escherichia coli.